A 139-amino-acid chain; its full sequence is Actin-depolymerizing factor 9 (139 aa).

Residues 7-139 (GLAVNDECKF…SLDIIRARAH (133 aa)) form the ADF-H domain.

It belongs to the actin-binding proteins ADF family.

Its function is as follows. Actin-depolymerizing protein. Severs actin filaments (F-actin) and binds to actin monomers. The chain is Actin-depolymerizing factor 9 (ADF9) from Oryza sativa subsp. japonica (Rice).